A 422-amino-acid chain; its full sequence is Dihydroorotase (422 aa).

2 residues coordinate Zn(2+): His-53 and His-55. Substrate-binding positions include 55 to 57 and Asn-87; that span reads HFR. Residues Glu-138, His-172, His-223, and Asp-291 each coordinate Zn(2+). Asp-291 is a catalytic residue. His-295 is a substrate binding site.

It belongs to the metallo-dependent hydrolases superfamily. DHOase family. Class I DHOase subfamily. It depends on Zn(2+) as a cofactor.

It carries out the reaction (S)-dihydroorotate + H2O = N-carbamoyl-L-aspartate + H(+). It functions in the pathway pyrimidine metabolism; UMP biosynthesis via de novo pathway; (S)-dihydroorotate from bicarbonate: step 3/3. Its function is as follows. Catalyzes the reversible cyclization of carbamoyl aspartate to dihydroorotate. The protein is Dihydroorotase of Halobacterium salinarum (strain ATCC 700922 / JCM 11081 / NRC-1) (Halobacterium halobium).